A 78-amino-acid polypeptide reads, in one-letter code: Metallothionein-like protein type 2 (78 aa).

Belongs to the metallothionein superfamily. Type 15 family.

In terms of biological role, metallothioneins have a high content of cysteine residues that bind various heavy metals. This chain is Metallothionein-like protein type 2, found in Nicotiana glutinosa (Tobacco).